The primary structure comprises 949 residues: General transcription factor II-I repeat domain-containing protein 2A (949 aa).

2 GTF2I-like repeats span residues 98–192 (QVHS…QLGG) and 323–417 (LSSI…SNVG).

It belongs to the TFII-I family. In terms of tissue distribution, ubiquitous.

The protein localises to the nucleus. This is General transcription factor II-I repeat domain-containing protein 2A (GTF2IRD2) from Homo sapiens (Human).